Consider the following 378-residue polypeptide: Endopolygalacturonase I (378 aa).

An N-terminal signal peptide occupies residues 1–20; that stretch reads MHLNTTLLVSLALGAASVLA. The propeptide occupies 21–39; it reads SPAPPAITAPPTAEEIAKR. Cys43 and Cys61 are joined by a disulfide. A glycan (O-linked (Man...) threonine) is linked at Thr44. O-linked (Man...) serine glycans are attached at residues Ser46, Ser48, Ser52, Ser53, Ser55, Ser57, and Ser62. A glycan (O-linked (Man...) threonine) is linked at Thr63. O-linked (Man...) serine glycosylation occurs at Ser73. PbH1 repeat units follow at residues 174–204, 205–226, 227–247, 256–277, and 285–307; these read SDYL…DIGT, STYV…AVNS, GENI…SIGS, VKNV…RIKT, and VSDV…VVQQ. The active-site Proton donor is Asp219. Cysteines 221 and 237 form a disulfide. Residue His241 is part of the active site. Residue Asn258 is glycosylated (N-linked (GlcNAc...) asparagine). Cystine bridges form between Cys345–Cys350 and Cys369–Cys378.

It belongs to the glycosyl hydrolase 28 family.

It is found in the secreted. The catalysed reaction is (1,4-alpha-D-galacturonosyl)n+m + H2O = (1,4-alpha-D-galacturonosyl)n + (1,4-alpha-D-galacturonosyl)m.. Its function is as follows. Involved in maceration and soft-rotting of plant tissue. Hydrolyzes the 1,4-alpha glycosidic bonds of de-esterified pectate in the smooth region of the plant cell wall. In Aspergillus aculeatus, this protein is Endopolygalacturonase I (pgaI).